A 255-amino-acid polypeptide reads, in one-letter code: Pimeloyl-[acyl-carrier protein] methyl ester esterase (255 aa).

The 226-residue stretch at 16 to 241 (LVLLHGWGMN…QSSHAPFMTE (226 aa)) folds into the AB hydrolase-1 domain. Residues W22, 82 to 83 (SL), and 143 to 147 (FMALQ) contribute to the substrate site. The active-site Nucleophile is S82. Residues D207 and H235 contribute to the active site. H235 contributes to the substrate binding site.

The protein belongs to the AB hydrolase superfamily. Carboxylesterase BioH family. Monomer.

The protein resides in the cytoplasm. The enzyme catalyses 6-carboxyhexanoyl-[ACP] methyl ester + H2O = 6-carboxyhexanoyl-[ACP] + methanol + H(+). The protein operates within cofactor biosynthesis; biotin biosynthesis. Functionally, the physiological role of BioH is to remove the methyl group introduced by BioC when the pimeloyl moiety is complete. It allows to synthesize pimeloyl-ACP via the fatty acid synthetic pathway through the hydrolysis of the ester bonds of pimeloyl-ACP esters. The protein is Pimeloyl-[acyl-carrier protein] methyl ester esterase of Vibrio parahaemolyticus serotype O3:K6 (strain RIMD 2210633).